A 322-amino-acid chain; its full sequence is Sideroflexin-1 (322 aa).

N-acetylserine is present on serine 2. The Mitochondrial matrix portion of the chain corresponds to 2–102; that stretch reads SGELPPNINI…MSAQVPMNMT (101 aa). The chain crosses the membrane as a helical span at residues 103–120; the sequence is ITGCMMTFYRTTPAVLFW. Over 121–146 the chain is Mitochondrial intermembrane; it reads QWINQSFNAVVNYTNRSGDAPLTVNE. Residues 147–167 traverse the membrane as a helical segment; that stretch reads LGTAYVSATTGAVATALGLNA. The Mitochondrial matrix segment spans residues 168–174; it reads LTKHVSP. Residues 175–195 traverse the membrane as a helical segment; it reads LIGRFVPFAAVAAANCINIPL. The Mitochondrial intermembrane segment spans residues 196–228; that stretch reads MRQRELKVGIPVTDENGNRLGESANAAKQAITQ. The chain crosses the membrane as a helical span at residues 229–249; that stretch reads VVVSRILMAAPGMAIPPFIMN. Topologically, residues 250-266 are mitochondrial matrix; that stretch reads TLEKKAFLKRFPWMSAP. Residues 267–287 traverse the membrane as a helical segment; that stretch reads VQVGIVGFCLVFATPLCCALF. At 288-322 the chain is on the mitochondrial intermembrane side; it reads PQKSSMSVTSLEAELQARIRETYPELRRVYFNKGL.

This sequence belongs to the sideroflexin family.

The protein localises to the mitochondrion inner membrane. It carries out the reaction L-serine(in) = L-serine(out). The enzyme catalyses L-alanine(in) = L-alanine(out). It catalyses the reaction L-cysteine(in) = L-cysteine(out). Its function is as follows. Amino acid transporter importing serine, an essential substrate of the mitochondrial branch of the one-carbon pathway, into mitochondria. Mitochondrial serine is then converted to glycine and formate, which exits to the cytosol where it is used to generate the charged folates that serve as one-carbon donors. May also transport other amino acids including alanine and cysteine. This Bos taurus (Bovine) protein is Sideroflexin-1 (SFXN1).